The chain runs to 1069 residues: Protocadherin-8 (1069 aa).

An N-terminal signal peptide occupies residues 1-29 (MSPVKRWGSPCLFPLQLFSLCWVLSVAQS). Cadherin domains are found at residues 30-135 (KTVR…APRF), 136-245 (PRAQ…SPAF), 247-354 (QGAV…APDI), 393-497 (QETG…APLF), 498-609 (TKPV…SPVL), and 615-721 (ANGS…VPAS). Residues 30 to 747 (KTVRYSTFEE…SGPSLQWDTP (718 aa)) are Extracellular-facing. The N-linked (GlcNAc...) asparagine glycan is linked to asparagine 616. The interval 719 to 738 (PASAGSPEHFRPPGSRLAPS) is disordered. Residues 748–768 (LIVIIVLAGSCTLLLAAIIAI) form a helical membrane-spanning segment. Residues 769-1069 (ATTCNRRKKE…SPKKGTNENV (301 aa)) are Cytoplasmic-facing. Disordered regions lie at residues 777–859 (KEVR…TGES), 905–927 (REAE…DSDS), and 1031–1069 (LSPP…NENV). 2 stretches are compositionally biased toward basic and acidic residues: residues 780–790 (RKGGALREERP) and 905–920 (REAE…KGDS). The residue at position 1052 (serine 1052) is a Phosphoserine.

In terms of assembly, the N-terminal extracellular domain forms homophilic interactions; these interactions activate p38 MAPK via TAOK2 and trigger endocytosis. Interacts with CDH2; this interaction may lead to CDH2 cointernalization. Interacts with CDH11. Interacts with TAOK2. Enriched in brain relative to peripheral tissues, with low expression in the testis. Expressed in hippocampal neurons (at protein level).

It localises to the cell membrane. The protein resides in the cell projection. It is found in the dendrite. The protein localises to the presynaptic cell membrane. Its subcellular location is the postsynaptic cell membrane. Functionally, calcium-dependent cell-adhesion protein. May play a role in activity-induced synaptic reorganization underlying long term memory. Could be involved in CDH2 internalization through TAOK2/p38 MAPK pathway. In hippocampal neurons, may play a role in the down-regulation of dendritic spines, maybe through its action on CDH2 endocytosis. The protein is Protocadherin-8 (Pcdh8) of Rattus norvegicus (Rat).